The primary structure comprises 466 residues: Coagulation factor VII (466 aa).

The N-terminal stretch at 1–20 is a signal peptide; it reads MVSQALRLLCLLLGLQGCLA. The propeptide occupies 21–60; sequence AGGVAEASGGETRDMPWKPGPHRVFITQEEAHGVLHRRRR. One can recognise a Gla domain in the interval 61-105; the sequence is ANAFLEELRPGSLERECKEEQCSFEEAREIFKDLERTKLFWISYS. 4-carboxyglutamate occurs at positions 66, 67, 74, 76, 79, 80, 85, 86, 89, and 95. A disulfide bond links C77 and C82. The region spanning 106 to 142 is the EGF-like 1; calcium-binding domain; it reads DGDQCASSPCQNGGSCKDQLQSYICFCLPAFEGRNCE. 10 cysteine pairs are disulfide-bonded: C110-C121, C115-C130, C132-C141, C151-C162, C158-C172, C174-C187, C195-C322, C219-C224, C238-C254, and C370-C389. A glycan (O-linked (Glc...) serine; alternate) is linked at S112. O-linked (Xyl...) serine; alternate glycosylation is present at S112. S120 carries an O-linked (Fuc) serine glycan. D123 carries the (3R)-3-hydroxyaspartate modification. Residues 147 to 188 form the EGF-like 2 domain; it reads DQLICVNENGGCEQYCSDHTGTKRSCRCHEGYSLLADGVSCT. N205 carries N-linked (GlcNAc...) asparagine glycosylation. The region spanning 213–452 is the Peptidase S1 domain; the sequence is IVGGKVCPKG…YIEWLQKLMR (240 aa). Residues H253 and D302 each act as charge relay system in the active site. N382 carries N-linked (GlcNAc...) asparagine glycosylation. Residue D398 participates in substrate binding. C400 and C428 are joined by a disulfide. Catalysis depends on S404, which acts as the Charge relay system.

This sequence belongs to the peptidase S1 family. In terms of assembly, heterodimer of a light chain and a heavy chain linked by a disulfide bond. In terms of processing, the vitamin K-dependent, enzymatic carboxylation of some glutamate residues allows the modified protein to bind calcium. Post-translationally, the iron and 2-oxoglutarate dependent 3-hydroxylation of aspartate and asparagine is (R) stereospecific within EGF domains. O-glycosylated. O-fucosylated by POFUT1 on a conserved serine or threonine residue found in the consensus sequence C2-X(4,5)-[S/T]-C3 of EGF domains, where C2 and C3 are the second and third conserved cysteines. In terms of processing, can be either O-glucosylated or O-xylosylated at Ser-112 by POGLUT1.

It localises to the secreted. The enzyme catalyses Selective cleavage of Arg-|-Ile bond in factor X to form factor Xa.. Functionally, initiates the extrinsic pathway of blood coagulation. Serine protease that circulates in the blood in a zymogen form. Factor VII is converted to factor VIIa by factor Xa, factor XIIa, factor IXa, or thrombin by minor proteolysis. In the presence of tissue factor and calcium ions, factor VIIa then converts factor X to factor Xa by limited proteolysis. Factor VIIa also converts factor IX to factor IXa in the presence of tissue factor and calcium. This chain is Coagulation factor VII (F7), found in Pan paniscus (Pygmy chimpanzee).